The sequence spans 204 residues: Large ribosomal subunit protein eL15 (204 aa).

Positions 185–204 (GGSRRAAWKRKNREHMHRKR) are disordered. Positions 190–204 (AAWKRKNREHMHRKR) are enriched in basic residues.

The protein belongs to the eukaryotic ribosomal protein eL15 family.

The polypeptide is Large ribosomal subunit protein eL15 (RpL15) (Drosophila melanogaster (Fruit fly)).